A 251-amino-acid chain; its full sequence is MSGSNPKAAAAASAAGPGGLVAGKEEKKKAGGGVLNRLKARRQAPHHAADDGVGAAVTEQELLALDTIRPEHVLRLSRVTENYLCKPEDNIYSIDFTRFKIRDLETGTVLFEIAKPCVSDQEEDEEEGGGDVDISAGRFVRYQFTPAFLRLRTVGATVEFTVGDKPVSNFRMIERHYFREHLLKNFDFDFGFCIPSSRNTCEHIYEFPQLSEDVIRLMIENPYETRSDSFYFVDNKLIMHNKADYAYNGGQ.

Positions 1–28 (MSGSNPKAAAAASAAGPGGLVAGKEEKK) are disordered. Serine 2 is subject to N-acetylserine. Lysine 24 bears the N6-acetyllysine mark. Position 142 (tyrosine 142) interacts with tetradecanoate.

Belongs to the PDE6D/unc-119 family. Found in a complex with ARL3, RP2 and UNC119B; RP2 induces hydrolysis of GTP ARL3 in the complex, leading to the release of UNC119B. Interacts with NPHP3 (when myristoylated). Interacts with CYS1 (when myristoylated). Interacts with MACIR; interaction only takes place when UNC119B is not liganded with myristoylated proteins.

The protein localises to the cell projection. Its subcellular location is the cilium. In terms of biological role, myristoyl-binding protein that acts as a cargo adapter: specifically binds the myristoyl moiety of a subset of N-terminally myristoylated proteins and is required for their localization. Binds myristoylated NPHP3 and plays a key role in localization of NPHP3 to the primary cilium membrane. Does not bind all myristoylated proteins. Probably plays a role in trafficking proteins in photoreceptor cells. This Homo sapiens (Human) protein is Protein unc-119 homolog B (UNC119B).